A 141-amino-acid polypeptide reads, in one-letter code: Hemoglobin subunit alpha (141 aa).

The Globin domain occupies 2 to 141 (AFTACEKQTI…ICQELSSRYR (140 aa)). His-59 provides a ligand contact to O2. Residue His-88 participates in heme b binding.

The protein belongs to the globin family. Heterotetramer of two alpha chains and two beta chains. Red blood cells.

In terms of biological role, involved in oxygen transport from gills to the various peripheral tissues. This Mustelus griseus (Spotless smooth-hound) protein is Hemoglobin subunit alpha (HBA).